The primary structure comprises 160 residues: Ribosomal RNA large subunit methyltransferase H (160 aa).

Residues Leu76, Gly108, and 127-132 (LGKMTW) contribute to the S-adenosyl-L-methionine site.

This sequence belongs to the RNA methyltransferase RlmH family. As to quaternary structure, homodimer.

It is found in the cytoplasm. It catalyses the reaction pseudouridine(1915) in 23S rRNA + S-adenosyl-L-methionine = N(3)-methylpseudouridine(1915) in 23S rRNA + S-adenosyl-L-homocysteine + H(+). In terms of biological role, specifically methylates the pseudouridine at position 1915 (m3Psi1915) in 23S rRNA. This is Ribosomal RNA large subunit methyltransferase H from Sinorhizobium medicae (strain WSM419) (Ensifer medicae).